A 422-amino-acid polypeptide reads, in one-letter code: Serine--tRNA ligase (422 aa).

Residues 1–20 (MHDLKSIRDNPDGFDAGLKR) are disordered. 229–231 (TAE) is a binding site for L-serine. 260–262 (RSE) serves as a coordination point for ATP. An L-serine-binding site is contributed by E283. 347-350 (EISS) provides a ligand contact to ATP. S383 is a binding site for L-serine.

It belongs to the class-II aminoacyl-tRNA synthetase family. Type-1 seryl-tRNA synthetase subfamily. In terms of assembly, homodimer. The tRNA molecule binds across the dimer.

It is found in the cytoplasm. The catalysed reaction is tRNA(Ser) + L-serine + ATP = L-seryl-tRNA(Ser) + AMP + diphosphate + H(+). It carries out the reaction tRNA(Sec) + L-serine + ATP = L-seryl-tRNA(Sec) + AMP + diphosphate + H(+). It functions in the pathway aminoacyl-tRNA biosynthesis; selenocysteinyl-tRNA(Sec) biosynthesis; L-seryl-tRNA(Sec) from L-serine and tRNA(Sec): step 1/1. Catalyzes the attachment of serine to tRNA(Ser). Is also able to aminoacylate tRNA(Sec) with serine, to form the misacylated tRNA L-seryl-tRNA(Sec), which will be further converted into selenocysteinyl-tRNA(Sec). In Paramagnetospirillum magneticum (strain ATCC 700264 / AMB-1) (Magnetospirillum magneticum), this protein is Serine--tRNA ligase.